The following is a 154-amino-acid chain: Large ribosomal subunit protein uL13 (154 aa).

Belongs to the universal ribosomal protein uL13 family. As to quaternary structure, part of the 50S ribosomal subunit.

Its function is as follows. This protein is one of the early assembly proteins of the 50S ribosomal subunit, although it is not seen to bind rRNA by itself. It is important during the early stages of 50S assembly. In Rhodopseudomonas palustris (strain BisB18), this protein is Large ribosomal subunit protein uL13.